The sequence spans 174 residues: Protein GrpE (174 aa).

The protein belongs to the GrpE family. As to quaternary structure, homodimer.

Its subcellular location is the cytoplasm. In terms of biological role, participates actively in the response to hyperosmotic and heat shock by preventing the aggregation of stress-denatured proteins, in association with DnaK and GrpE. It is the nucleotide exchange factor for DnaK and may function as a thermosensor. Unfolded proteins bind initially to DnaJ; upon interaction with the DnaJ-bound protein, DnaK hydrolyzes its bound ATP, resulting in the formation of a stable complex. GrpE releases ADP from DnaK; ATP binding to DnaK triggers the release of the substrate protein, thus completing the reaction cycle. Several rounds of ATP-dependent interactions between DnaJ, DnaK and GrpE are required for fully efficient folding. This is Protein GrpE from Methanothermobacter thermautotrophicus (strain ATCC 29096 / DSM 1053 / JCM 10044 / NBRC 100330 / Delta H) (Methanobacterium thermoautotrophicum).